We begin with the raw amino-acid sequence, 663 residues long: CXXC-type zinc finger protein 1 (663 aa).

Residues 60–110 (QAYCICRSSDCSRFMIGCDGCEEWYHGDCIGITEKEAKHIKQYYCRRCKKE) form a PHD-type zinc finger. The span at 134 to 161 (TSLNAPGVGPSGAAPAAAPVASATTSQQ) shows a compositional bias: low complexity. Positions 134 to 183 (TSLNAPGVGPSGAAPAAAPVASATTSQQAPPPTTAAAKRKNSSAREPKMG) are disordered. A CXXC-type zinc finger spans residues 175-219 (SSAREPKMGKRCGTCEGCRRPNCNQCDACRVRVGHKPRCIFRTCV). Residues Cys186, Cys189, Cys192, Cys197, Cys200, Cys203, Cys213, and Cys218 each coordinate Zn(2+). The interval 230 to 254 (QATQAGPSRKREKAAPKSRNVQVGP) is disordered. Ser258 bears the Phosphoserine mark.

As to quaternary structure, component of the SET1 complex, composed at least of the catalytic subunit Set1, wds/WDR5, Wdr82, Rbbp5, ash2, Cfp1/CXXC1, hcf and Dpy-30L1.

It localises to the nucleus. In terms of biological role, component of the SET1 complex that specifically di- and trimethylates 'Lys-4' of histone H3. Essential for Set1 association with chromatin and trimethylation of histone H3 at 'Lys-4' at transcription puffs. Additionally, is critical for general chromosomal association of Set1. This Drosophila melanogaster (Fruit fly) protein is CXXC-type zinc finger protein 1 (Cfp1).